The sequence spans 275 residues: Large ribosomal subunit protein uL2 (275 aa).

Positions 218–275 (RPQTRGSAMNPIDHPHGGGEGKTNSGRHPVSPWGMPTKGYKTRKKKASDKLIISKRKK) are disordered. Residues 257-275 (YKTRKKKASDKLIISKRKK) show a composition bias toward basic residues.

It belongs to the universal ribosomal protein uL2 family. As to quaternary structure, part of the 50S ribosomal subunit. Forms a bridge to the 30S subunit in the 70S ribosome.

Its function is as follows. One of the primary rRNA binding proteins. Required for association of the 30S and 50S subunits to form the 70S ribosome, for tRNA binding and peptide bond formation. It has been suggested to have peptidyltransferase activity; this is somewhat controversial. Makes several contacts with the 16S rRNA in the 70S ribosome. This chain is Large ribosomal subunit protein uL2, found in Sulfurovum sp. (strain NBC37-1).